The chain runs to 289 residues: Phycobilisome 39 kDa linker polypeptide, phycocyanin-associated, rod (289 aa).

A PBS-linker domain is found at 2–180 (PITSAASRLG…LYRGYANSDR (179 aa)). A disordered region spans residues 213-233 (SYLPSKQGTAPSRTFGRSSQG). Over residues 216-233 (PSKQGTAPSRTFGRSSQG) the composition is skewed to polar residues. The region spanning 236-288 (PRLYRIEVTGISLPRYPKVRRSNKEFIVPYEQLSSTLQQINKLGGKVASITFA) is the CpcD-like domain.

It belongs to the phycobilisome linker protein family.

It is found in the cellular thylakoid membrane. Functionally, rod linker protein, associated with phycocyanin. Linker polypeptides determine the state of aggregation and the location of the disk-shaped phycobiliprotein units within the phycobilisome and modulate their spectroscopic properties in order to mediate a directed and optimal energy transfer. The sequence is that of Phycobilisome 39 kDa linker polypeptide, phycocyanin-associated, rod (cpcI2) from Microchaete diplosiphon (Fremyella diplosiphon).